We begin with the raw amino-acid sequence, 102 residues long: Anti-lipopolysaccharide factor (102 aa).

Residues Cys32 and Cys53 are joined by a disulfide bond.

Its function is as follows. Binds tightly to LPS and thus specifically inhibits the LPS-mediated activation of the hemolymph coagulation. It has a strong antibacterial effect especially on the growth of Gram-negative bacteria. This Tachypleus tridentatus (Japanese horseshoe crab) protein is Anti-lipopolysaccharide factor.